The sequence spans 268 residues: Undecaprenyl-diphosphatase (268 aa).

The next 8 membrane-spanning stretches (helical) occupy residues 4–24, 50–70, 84–104, 109–129, 144–164, 184–204, 214–234, and 245–265; these read STTL…FIPV, IQLG…ISVI, AAVL…HGFI, FETP…LLFV, VPLG…VPGV, AAEF…AFDL, GALG…VLVV, and GYSL…AALL.

The protein belongs to the UppP family.

It is found in the cell inner membrane. It catalyses the reaction di-trans,octa-cis-undecaprenyl diphosphate + H2O = di-trans,octa-cis-undecaprenyl phosphate + phosphate + H(+). In terms of biological role, catalyzes the dephosphorylation of undecaprenyl diphosphate (UPP). Confers resistance to bacitracin. The protein is Undecaprenyl-diphosphatase of Cereibacter sphaeroides (strain ATCC 17025 / ATH 2.4.3) (Rhodobacter sphaeroides).